Reading from the N-terminus, the 431-residue chain is Nuclear envelope integral membrane protein 1 (431 aa).

An N-terminal signal peptide occupies residues 1–29 (MAGEVEGEGCRVSWGVLVALLLLPLPSLC). 5 consecutive transmembrane segments (helical) span residues 151–171 (PRLF…DTLS), 175–195 (IFYY…ILVF), 206–226 (PFVA…QLVF), 236–256 (YWQY…AFCY), and 266–286 (SINI…YISV). The tract at residues 176–287 (FYYSTGITVG…GLLLMYISVQ (112 aa)) is a; required for its colocalization with lamins at the nuclear envelope. The short motif at 317–325 (RKIKLKRGK) is the Nuclear localization signal element. Residues 326–395 (PSPPRLLTEE…LTPNEVSVHE (70 aa)) form a b; required for interaction with ran region. The tract at residues 326 to 431 (PSPPRLLTEE…IEPVLYQDLR (106 aa)) is interaction with banf1-a and banf1-b. The interval 368 to 375 (SRIQSPKR) is BAF-binding site (BBS); essential for interaction with banf1-a, banf1-b and ran.

Belongs to the NEMP family. As to quaternary structure, homooligomer. Interacts with banf1-a and banf1-b. Interacts with ran-gtp. Phosphorylated.

It is found in the nucleus inner membrane. The protein localises to the nucleus envelope. Its function is as follows. In concert with ran, required for proper eye development. May be involved in the expression of early eye marker genes. Contributes to nuclear envelope stiffness in germ cells. Required for fertility. Essential for normal erythropoiesis. Required for efficient nuclear envelope opening and enucleation during the late stages of erythroblast maturation. The protein is Nuclear envelope integral membrane protein 1 (nemp1) of Xenopus tropicalis (Western clawed frog).